The sequence spans 376 residues: Inactive 2'-5'-oligoadenylate synthase 1B (376 aa).

Topologically, residues Met1 to Lys351 are cytoplasmic. Residues Tyr352–Phe370 traverse the membrane as a helical; Anchor for type IV membrane protein segment. Residues Gly371–Gly376 lie on the Extracellular side of the membrane.

It belongs to the 2-5A synthase family. In terms of assembly, interacts with OSBPL1A and ABCF3. Highly expressed in lung, spleen and thymus. Also detected at lower levels in heart, kidney, liver, lung, skeletal muscle, testes, uterus and ovaries.

The protein resides in the endoplasmic reticulum membrane. Does not have 2'-5'-OAS activity, but can bind double-stranded RNA. The full-length protein displays antiviral activity against flaviviruses such as west Nile virus (WNV) via an alternative antiviral pathway independent of RNase L. The truncated form of the protein lacks antiviral activity. The protein is Inactive 2'-5'-oligoadenylate synthase 1B (Oas1b) of Mus musculus (Mouse).